The primary structure comprises 147 residues: D-aminoacyl-tRNA deacylase (147 aa).

A Gly-cisPro motif, important for rejection of L-amino acids motif is present at residues 137-138 (GP).

Belongs to the DTD family. As to quaternary structure, homodimer.

It localises to the cytoplasm. It catalyses the reaction glycyl-tRNA(Ala) + H2O = tRNA(Ala) + glycine + H(+). It carries out the reaction a D-aminoacyl-tRNA + H2O = a tRNA + a D-alpha-amino acid + H(+). Functionally, an aminoacyl-tRNA editing enzyme that deacylates mischarged D-aminoacyl-tRNAs. Also deacylates mischarged glycyl-tRNA(Ala), protecting cells against glycine mischarging by AlaRS. Acts via tRNA-based rather than protein-based catalysis; rejects L-amino acids rather than detecting D-amino acids in the active site. By recycling D-aminoacyl-tRNA to D-amino acids and free tRNA molecules, this enzyme counteracts the toxicity associated with the formation of D-aminoacyl-tRNA entities in vivo and helps enforce protein L-homochirality. This is D-aminoacyl-tRNA deacylase from Bacillus licheniformis (strain ATCC 14580 / DSM 13 / JCM 2505 / CCUG 7422 / NBRC 12200 / NCIMB 9375 / NCTC 10341 / NRRL NRS-1264 / Gibson 46).